Consider the following 127-residue polypeptide: Fluoride-specific ion channel FluC (127 aa).

Transmembrane regions (helical) follow at residues Ser4–Met24, Pro35–Phe55, Leu68–Val88, and Ile96–Ala116. Residues Gly75 and Thr78 each contribute to the Na(+) site.

It belongs to the fluoride channel Fluc/FEX (TC 1.A.43) family.

The protein localises to the cell inner membrane. It catalyses the reaction fluoride(in) = fluoride(out). With respect to regulation, na(+) is not transported, but it plays an essential structural role and its presence is essential for fluoride channel function. Functionally, fluoride-specific ion channel. Important for reducing fluoride concentration in the cell, thus reducing its toxicity. The chain is Fluoride-specific ion channel FluC from Pseudomonas putida (strain W619).